A 558-amino-acid polypeptide reads, in one-letter code: Arginine--tRNA ligase (558 aa).

The 'HIGH' region motif lies at 119 to 129; it reads ANPNGPLHVGH.

This sequence belongs to the class-I aminoacyl-tRNA synthetase family.

The protein localises to the cytoplasm. The enzyme catalyses tRNA(Arg) + L-arginine + ATP = L-arginyl-tRNA(Arg) + AMP + diphosphate. This Methanoregula boonei (strain DSM 21154 / JCM 14090 / 6A8) protein is Arginine--tRNA ligase.